The primary structure comprises 268 residues: Putative hydro-lyase PSPTO_5379 (268 aa).

Belongs to the D-glutamate cyclase family.

The protein is Putative hydro-lyase PSPTO_5379 of Pseudomonas syringae pv. tomato (strain ATCC BAA-871 / DC3000).